A 612-amino-acid polypeptide reads, in one-letter code: Membrane protein insertase YidC (612 aa).

7 helical membrane-spanning segments follow: residues 4-24, 329-349, 358-378, 434-454, 484-504, 524-544, and 546-566; these read NTII…YLNH, LVPL…IPIF, VNLG…LFPL, ILLQ…AIGL, FLGN…ILNT, LTMY…PAGL, and YYYL…RGLV.

This sequence belongs to the OXA1/ALB3/YidC family. Type 1 subfamily. In terms of assembly, interacts with the Sec translocase complex via SecD. Specifically interacts with transmembrane segments of nascent integral membrane proteins during membrane integration.

Its subcellular location is the cell inner membrane. Functionally, required for the insertion and/or proper folding and/or complex formation of integral membrane proteins into the membrane. Involved in integration of membrane proteins that insert both dependently and independently of the Sec translocase complex, as well as at least some lipoproteins. Aids folding of multispanning membrane proteins. This is Membrane protein insertase YidC from Azobacteroides pseudotrichonymphae genomovar. CFP2.